Here is a 436-residue protein sequence, read N- to C-terminus: Tol-Pal system protein TolB (436 aa).

Positions 1–19 (MVKCSLIRALMVVAGLVGA) are cleaved as a signal peptide.

Belongs to the TolB family. In terms of assembly, the Tol-Pal system is composed of five core proteins: the inner membrane proteins TolA, TolQ and TolR, the periplasmic protein TolB and the outer membrane protein Pal. They form a network linking the inner and outer membranes and the peptidoglycan layer.

The protein resides in the periplasm. Its function is as follows. Part of the Tol-Pal system, which plays a role in outer membrane invagination during cell division and is important for maintaining outer membrane integrity. The polypeptide is Tol-Pal system protein TolB (Rhizobium etli (strain ATCC 51251 / DSM 11541 / JCM 21823 / NBRC 15573 / CFN 42)).